The sequence spans 376 residues: uncharacterized protein (376 aa).

It belongs to the YCR102c/YLR460c/YNL134c family.

This is an uncharacterized protein from Saccharomyces cerevisiae (strain ATCC 204508 / S288c) (Baker's yeast).